The chain runs to 235 residues: Small ribosomal subunit protein uS2c (235 aa).

This sequence belongs to the universal ribosomal protein uS2 family.

The protein localises to the plastid. Its subcellular location is the chloroplast. This Zygnema circumcarinatum (Green alga) protein is Small ribosomal subunit protein uS2c (rps2).